The chain runs to 414 residues: Gamma-glutamyl phosphate reductase (414 aa).

This sequence belongs to the gamma-glutamyl phosphate reductase family.

Its subcellular location is the cytoplasm. The enzyme catalyses L-glutamate 5-semialdehyde + phosphate + NADP(+) = L-glutamyl 5-phosphate + NADPH + H(+). It participates in amino-acid biosynthesis; L-proline biosynthesis; L-glutamate 5-semialdehyde from L-glutamate: step 2/2. Functionally, catalyzes the NADPH-dependent reduction of L-glutamate 5-phosphate into L-glutamate 5-semialdehyde and phosphate. The product spontaneously undergoes cyclization to form 1-pyrroline-5-carboxylate. In Xanthomonas campestris pv. campestris (strain B100), this protein is Gamma-glutamyl phosphate reductase.